A 363-amino-acid polypeptide reads, in one-letter code: 5-formaminoimidazole-4-carboxamide-1-(beta)-D-ribofuranosyl 5'-monophosphate synthetase (363 aa).

Positions 29 and 96 each coordinate 5-amino-1-(5-phospho-beta-D-ribosyl)imidazole-4-carboxamide. The 237-residue stretch at 118–354 (RDILRWEAER…ISREIKNAIE (237 aa)) folds into the ATP-grasp domain. Residues 148 to 210 (PEDI…TNFC) and E232 contribute to the ATP site. N260 lines the 5-amino-1-(5-phospho-beta-D-ribosyl)imidazole-4-carboxamide pocket. 2 residues coordinate Mg(2+): Q299 and E312.

This sequence belongs to the phosphohexose mutase family. It depends on Mg(2+) as a cofactor. Requires Mn(2+) as cofactor.

The catalysed reaction is 5-amino-1-(5-phospho-beta-D-ribosyl)imidazole-4-carboxamide + formate + ATP = 5-formamido-1-(5-phospho-D-ribosyl)imidazole-4-carboxamide + ADP + phosphate. Its pathway is purine metabolism; IMP biosynthesis via de novo pathway; 5-formamido-1-(5-phospho-D-ribosyl)imidazole-4-carboxamide from 5-amino-1-(5-phospho-D-ribosyl)imidazole-4-carboxamide (formate route): step 1/1. In terms of biological role, catalyzes the ATP- and formate-dependent formylation of 5-aminoimidazole-4-carboxamide-1-beta-d-ribofuranosyl 5'-monophosphate (AICAR) to 5-formaminoimidazole-4-carboxamide-1-beta-d-ribofuranosyl 5'-monophosphate (FAICAR) in the absence of folates. The protein is 5-formaminoimidazole-4-carboxamide-1-(beta)-D-ribofuranosyl 5'-monophosphate synthetase of Methanosphaera stadtmanae (strain ATCC 43021 / DSM 3091 / JCM 11832 / MCB-3).